A 622-amino-acid polypeptide reads, in one-letter code: Chaperone protein HscA homolog (622 aa).

The protein belongs to the heat shock protein 70 family.

Chaperone involved in the maturation of iron-sulfur cluster-containing proteins. Has a low intrinsic ATPase activity which is markedly stimulated by HscB. This chain is Chaperone protein HscA homolog, found in Burkholderia ambifaria (strain MC40-6).